A 365-amino-acid chain; its full sequence is Protein-glutamate methylesterase/protein-glutamine glutaminase 1 (365 aa).

Positions 4–121 constitute a Response regulatory domain; sequence KVLVVDDSQF…SRDSVVLKKR (118 aa). The residue at position 55 (Asp-55) is a 4-aspartylphosphate. The tract at residues 138 to 173 is disordered; it reads AARSTTQPSGVRPSALGANLSSSRSPRPASSAPSAP. A compositionally biased stretch (low complexity) spans 158-172; sequence SSSRSPRPASSAPSA. A CheB-type methylesterase domain is found at 182 to 365; it reads KLVAIGASTG…QVWQRLVSDV (184 aa). Active-site residues include Ser-189, His-216, and Asp-310.

It belongs to the CheB family. Post-translationally, phosphorylated by CheA. Phosphorylation of the N-terminal regulatory domain activates the methylesterase activity.

The protein resides in the cytoplasm. The enzyme catalyses [protein]-L-glutamate 5-O-methyl ester + H2O = L-glutamyl-[protein] + methanol + H(+). It catalyses the reaction L-glutaminyl-[protein] + H2O = L-glutamyl-[protein] + NH4(+). Involved in chemotaxis. Part of a chemotaxis signal transduction system that modulates chemotaxis in response to various stimuli. Catalyzes the demethylation of specific methylglutamate residues introduced into the chemoreceptors (methyl-accepting chemotaxis proteins or MCP) by CheR. Also mediates the irreversible deamidation of specific glutamine residues to glutamic acid. The chain is Protein-glutamate methylesterase/protein-glutamine glutaminase 1 from Saccharophagus degradans (strain 2-40 / ATCC 43961 / DSM 17024).